We begin with the raw amino-acid sequence, 212 residues long: Interleukin-6 (212 aa).

The signal sequence occupies residues 1–29; sequence MNSFSTSAFGPVAFSLGLLLVLPAAFPAP. Intrachain disulfides connect Cys72–Cys78 and Cys101–Cys111. The N-linked (GlcNAc...) asparagine glycan is linked to Asn73. N-linked (GlcNAc...) asparagine glycosylation is present at Asn172.

This sequence belongs to the IL-6 superfamily. As to quaternary structure, component of a hexamer of two molecules each of IL6, IL6R and IL6ST; first binds to IL6R to associate with the signaling subunit IL6ST. Interacts with IL6R (via the N-terminal ectodomain); this interaction may be affected by IL6R-binding with SORL1, hence decreasing IL6 cis signaling. Interacts with SORL1 (via the N-terminal ectodomain); this interaction leads to IL6 internalization and lysosomal degradation. May form a trimeric complex with the soluble SORL1 ectodomain and soluble IL6R receptor; this interaction might stabilize circulating IL6, hence promoting IL6 trans signaling.

Its subcellular location is the secreted. Its function is as follows. Cytokine with a wide variety of biological functions in immunity, tissue regeneration, and metabolism. Binds to IL6R, then the complex associates to the signaling subunit IL6ST/gp130 to trigger the intracellular IL6-signaling pathway. The interaction with the membrane-bound IL6R and IL6ST stimulates 'classic signaling', whereas the binding of IL6 and soluble IL6R to IL6ST stimulates 'trans-signaling'. Alternatively, 'cluster signaling' occurs when membrane-bound IL6:IL6R complexes on transmitter cells activate IL6ST receptors on neighboring receiver cells. Functionally, IL6 is a potent inducer of the acute phase response. Rapid production of IL6 contributes to host defense during infection and tissue injury, but excessive IL6 synthesis is involved in disease pathology. In the innate immune response, is synthesized by myeloid cells, such as macrophages and dendritic cells, upon recognition of pathogens through toll-like receptors (TLRs) at the site of infection or tissue injury. In the adaptive immune response, is required for the differentiation of B cells into immunoglobulin-secreting cells. Plays a major role in the differentiation of CD4(+) T cell subsets. Essential factor for the development of T follicular helper (Tfh) cells that are required for the induction of germinal-center formation. Required to drive naive CD4(+) T cells to the Th17 lineage. Also required for proliferation of myeloma cells and the survival of plasmablast cells. In terms of biological role, acts as an essential factor in bone homeostasis and on vessels directly or indirectly by induction of VEGF, resulting in increased angiogenesis activity and vascular permeability. Induces, through 'trans-signaling' and synergistically with IL1B and TNF, the production of VEGF. Involved in metabolic controls, is discharged into the bloodstream after muscle contraction increasing lipolysis and improving insulin resistance. 'Trans-signaling' in central nervous system also regulates energy and glucose homeostasis. Mediates, through GLP-1, crosstalk between insulin-sensitive tissues, intestinal L cells and pancreatic islets to adapt to changes in insulin demand. Also acts as a myokine. Plays a protective role during liver injury, being required for maintenance of tissue regeneration. Also has a pivotal role in iron metabolism by regulating HAMP/hepcidin expression upon inflammation or bacterial infection. Through activation of IL6ST-YAP-NOTCH pathway, induces inflammation-induced epithelial regeneration. The chain is Interleukin-6 (IL6) from Cercocebus atys (Sooty mangabey).